The primary structure comprises 492 residues: Cell death protein 6 (492 aa).

The segment covering 19–29 (GNNINGEGSSS) has biased composition (low complexity). The interval 19–38 (GNNINGEGSSSPSTSAPQVK) is disordered. The PID domain occupies 55–215 (INGHVEYVAR…YILKKKIVEL (161 aa)). Disordered regions lie at residues 241-385 (TGPP…STAA) and 464-492 (TGDL…NLKQ). The span at 244–268 (PIYPGLGPPALPLSPMPQGPPPNIP) shows a compositional bias: pro residues. A compositionally biased stretch (low complexity) spans 300–312 (ASPSVSPASTSPS). Over residues 313–333 (GPAPSIPPPRPPALAPPPPVA) the composition is skewed to pro residues. Over residues 373-383 (FDPRAGEKKST) the composition is skewed to basic and acidic residues.

This sequence belongs to the ced-6 family. As to quaternary structure, homodimer. Interacts with ced-1. Interacts with E3 ubiquitin-protein ligase trim-21. Detected in gonadal sheath cells.

The protein localises to the cytoplasm. Its function is as follows. May function as an adapter protein in a pathway that mediates recognition and phagocytosis of apoptotic cells during normal development. Promotes engulfment of cells at both early and late stages of apoptosis. Required for actin reorganization around apoptotic cells. Plays a role in protecting dopaminergic neurons from oxidative stress-induced degeneration. Mediates recruitment of E3 ubiquitin-protein ligase trim-21 to the apoptotic cell surface which promotes ubiquitination and degradation of ced-1. In Caenorhabditis elegans, this protein is Cell death protein 6.